A 208-amino-acid chain; its full sequence is Uracil phosphoribosyltransferase (208 aa).

5-phospho-alpha-D-ribose 1-diphosphate is bound by residues Arg78, Arg103, and Asp130–Ser138. Uracil is bound by residues Ile193 and Gly198–Ala200. Residue Asp199 participates in 5-phospho-alpha-D-ribose 1-diphosphate binding.

It belongs to the UPRTase family. Requires Mg(2+) as cofactor.

It catalyses the reaction UMP + diphosphate = 5-phospho-alpha-D-ribose 1-diphosphate + uracil. Its pathway is pyrimidine metabolism; UMP biosynthesis via salvage pathway; UMP from uracil: step 1/1. Its activity is regulated as follows. Allosterically activated by GTP. Its function is as follows. Catalyzes the conversion of uracil and 5-phospho-alpha-D-ribose 1-diphosphate (PRPP) to UMP and diphosphate. This is Uracil phosphoribosyltransferase from Roseiflexus castenholzii (strain DSM 13941 / HLO8).